A 79-amino-acid chain; its full sequence is D-alanyl carrier protein (79 aa).

In terms of domain architecture, Carrier spans 1–77; sequence MDVKAEVIEI…KIVEGVTELR (77 aa). Residue S35 is modified to O-(pantetheine 4'-phosphoryl)serine.

The protein belongs to the DltC family. 4'-phosphopantetheine is transferred from CoA to a specific serine of apo-DCP.

Its subcellular location is the cytoplasm. It functions in the pathway cell wall biogenesis; lipoteichoic acid biosynthesis. In terms of biological role, carrier protein involved in the D-alanylation of lipoteichoic acid (LTA). The loading of thioester-linked D-alanine onto DltC is catalyzed by D-alanine--D-alanyl carrier protein ligase DltA. The DltC-carried D-alanyl group is further transferred to cell membrane phosphatidylglycerol (PG) by forming an ester bond, probably catalyzed by DltD. D-alanylation of LTA plays an important role in modulating the properties of the cell wall in Gram-positive bacteria, influencing the net charge of the cell wall. This chain is D-alanyl carrier protein, found in Streptococcus thermophilus (strain CNRZ 1066).